Here is a 1365-residue protein sequence, read N- to C-terminus: MTLPQAQLDFFTTATSMLEWHYNLERNKPGLLELTGVSQHGRATMSGLNDYDYQSLSFLKSDRTHNLQQMRTVTKSAIPNEILEHFKHIKCHCTMGLFPEIGRAWLTIDSEIYIWTFNQTRDVAYYDGLSHLIVSVGLVKPKPGVFVQDVKYLLVLTTPIEVIVLGVTFGESSYNEMQLMNRPVFVIGTDNVSISVIKGTDDGRIFLGGRDGCLYEIYYQAESSWFGKRCKKINLSQGLVSYMVPSFLKVFSEVDPIEHIEIDNSRKLLYVLTEKGVIEAWDISTSYTTARRLGRITQNDITNQAVSLITTVDPSIFKSVKAICPLSADDADKLHLVAVTQCGVRLFFSTTSLNVKQQFGPAVPCSPGENTGFGQPAVQPPLSPNAEAPKGLYLLHVRLPPGYTPNATTNKPKQVHAAHYTEGTMLMITTQQHEQDLLWSLSSAPSVNFTYLVESTALESLDGVVWGLAEVHEPSTPQRKSPLNSARHARKVALLTNQGTHIIEVLKMVDVLRQILLSCNGPHHEEVKMFFQSQNQREACVTALLLATSDTYRGSDVALWAAQAFMLYGGEPCYQHQKFLNASNRNMANQTLGPNTTNVRERQSMFMSTPMPNSVANSPVGFPGSQFNQPISPIGNMQPPQVAVSNENSPIVFSAKHDGLYMYVSRMLHSVWQMRCVNEQFCSNLSQSECALLLSDLRSLRSFLEVHSVHDISSTTRVSFDNHLDRTNSYNTIMMGNTLLPIPEQRVLSEQAQVEETRSLSALNLFVKHACEVISLWNILNSHSFQLICVQLSPEHQKLLTCSTFRDLLITRSEVCAFLIISLINLYLKDAAGVSEVSKNLRENCPNLYRHEDDVTYKATELLMNAKNCTSATEKEHMLRTTLHMCKEAAPTLPLHSICMQFISADFFEGVIELSAVCASKSDPEEVGVHFYNNGEPADDREGYTCFATRMAYYKEVQLMLDHIYQRVCNKTHVQDKSINPLKGTAKASDAKNGATQTIPKIVAHTLKVKDPLIHITLYEWLLAHDMLKELLDVVEPSLGEFLRRSVSQNVDNVVLIDLLWKYYEKNSHHSQAAHILDNLAMTRSENINLEQRIEYLVRAVMCMRNGNVGSSLSNGIFLKELEDKLDIARVQKSVLAAMTELASDKLEAATAVKELNYALYDITQLYQHFAEPFDLWECQLSILNCSHHNDPLLIESVWGQIINSVVDKPGTTSERCNRLFTKIEILVREYGESGVCFPFAFLIRELEVKACQLRFPEGIVPEKLVSMNLDIELLLEYYSRMISMNERVWANEGNEWHLIQSVIRVVSLLADNAQSIWYRSKRRIVGKAQDIVAGCLNICYQKPDTNRLQHSLKELQSQLQRLLI.

The interval 1–508 is required for binding to Nup93-1 and anchoring to the nuclear pore complex; it reads MTLPQAQLDF…GTHIIEVLKM (508 aa). Residues 508-986 are required for binding to chromatin; the sequence is MVDVLRQILL…KSINPLKGTA (479 aa).

This sequence belongs to the non-repetitive/WGA-negative nucleoporin family. In terms of assembly, interacts (via N-terminus) with Nup93-1. Interacts with Nup35. Interacts with cup.

It localises to the nucleus. The protein resides in the nuclear pore complex. Its subcellular location is the chromosome. It is found in the nucleus membrane. The protein localises to the cytoplasm. Functionally, component of the nuclear pore complex. Has a role in the organization of the inner nuclear membrane proteins at the nuclear envelope. In germ cells, plays a role in the nuclear localization of components of the dpp signaling pathways, such as Medea and phosphorylated Mad. Binds to chromatin, and together with Nup62 and Nup93-1, contributes to karyosome morphology and chromatin organization including attachment to the nuclear envelope in oocytes and nurse cells. Has a role in female fertility including egg chamber development; in nurse cells, has a role in the organization of F-actin in subcortical and cytoplasmic actin filaments important for the transfer of cytoplasm from nurse cells to the growing oocytes. Has a role in male spermatogenesis and fertility. Has a role in germ line cell proliferation. The polypeptide is Nuclear pore complex protein Nup154 (Drosophila melanogaster (Fruit fly)).